The chain runs to 335 residues: Ketol-acid reductoisomerase (NADP(+)) (335 aa).

Positions 5-185 (SKIYTDNDAN…GATRAGVIPT (181 aa)) constitute a KARI N-terminal Rossmann domain. Residues 28–31 (YGSQ), Ser56, and 86–89 (DMVQ) each bind NADP(+). The active site involves His111. Gly137 contacts NADP(+). The KARI C-terminal knotted domain maps to 186-331 (TFKEETETDL…NQLRDLVQKG (146 aa)). Asp194, Glu198, Glu230, and Glu234 together coordinate Mg(2+). Ser255 serves as a coordination point for substrate.

Belongs to the ketol-acid reductoisomerase family. Mg(2+) serves as cofactor.

The catalysed reaction is (2R)-2,3-dihydroxy-3-methylbutanoate + NADP(+) = (2S)-2-acetolactate + NADPH + H(+). It catalyses the reaction (2R,3R)-2,3-dihydroxy-3-methylpentanoate + NADP(+) = (S)-2-ethyl-2-hydroxy-3-oxobutanoate + NADPH + H(+). Its pathway is amino-acid biosynthesis; L-isoleucine biosynthesis; L-isoleucine from 2-oxobutanoate: step 2/4. It participates in amino-acid biosynthesis; L-valine biosynthesis; L-valine from pyruvate: step 2/4. Involved in the biosynthesis of branched-chain amino acids (BCAA). Catalyzes an alkyl-migration followed by a ketol-acid reduction of (S)-2-acetolactate (S2AL) to yield (R)-2,3-dihydroxy-isovalerate. In the isomerase reaction, S2AL is rearranged via a Mg-dependent methyl migration to produce 3-hydroxy-3-methyl-2-ketobutyrate (HMKB). In the reductase reaction, this 2-ketoacid undergoes a metal-dependent reduction by NADPH to yield (R)-2,3-dihydroxy-isovalerate. This Saccharolobus solfataricus (strain ATCC 35092 / DSM 1617 / JCM 11322 / P2) (Sulfolobus solfataricus) protein is Ketol-acid reductoisomerase (NADP(+)).